We begin with the raw amino-acid sequence, 294 residues long: ATP phosphoribosyltransferase (294 aa).

The protein belongs to the ATP phosphoribosyltransferase family. Long subfamily. Requires Mg(2+) as cofactor.

The protein localises to the cytoplasm. It catalyses the reaction 1-(5-phospho-beta-D-ribosyl)-ATP + diphosphate = 5-phospho-alpha-D-ribose 1-diphosphate + ATP. Its pathway is amino-acid biosynthesis; L-histidine biosynthesis; L-histidine from 5-phospho-alpha-D-ribose 1-diphosphate: step 1/9. Its activity is regulated as follows. Feedback inhibited by histidine. In terms of biological role, catalyzes the condensation of ATP and 5-phosphoribose 1-diphosphate to form N'-(5'-phosphoribosyl)-ATP (PR-ATP). Has a crucial role in the pathway because the rate of histidine biosynthesis seems to be controlled primarily by regulation of HisG enzymatic activity. The sequence is that of ATP phosphoribosyltransferase from Prosthecochloris aestuarii (strain DSM 271 / SK 413).